Consider the following 933-residue polypeptide: uncharacterized protein (933 aa).

The span at 244-255 shows a compositional bias: basic and acidic residues; that stretch reads KKDIGAKPKPVD. Disordered regions lie at residues 244–277 and 343–364; these read KKDI…ELPD and SAPH…EWKG. A compositionally biased stretch (polar residues) spans 343-353; the sequence is SAPHQPSSQHA. Residues 771-791 form a helical membrane-spanning segment; the sequence is VIHGMVLMFAGGKLLFGGCVL. A compositionally biased stretch (basic and acidic residues) spans 890–907; it reads DKIEKEPPPSPEKVKPPE. The interval 890 to 933 is disordered; the sequence is DKIEKEPPPSPEKVKPPEIELQPFTKMRRSSKKTAGFKKLNSKK. Over residues 915-933 the composition is skewed to basic residues; that stretch reads KMRRSSKKTAGFKKLNSKK.

The protein localises to the membrane. This is an uncharacterized protein from Mus musculus (Mouse).